Here is a 63-residue protein sequence, read N- to C-terminus: Keratin-associated protein 19-8 (63 aa).

The protein belongs to the KRTAP type 19 family. Interacts with hair keratins.

Functionally, in the hair cortex, hair keratin intermediate filaments are embedded in an interfilamentous matrix, consisting of hair keratin-associated proteins (KRTAP), which are essential for the formation of a rigid and resistant hair shaft through their extensive disulfide bond cross-linking with abundant cysteine residues of hair keratins. The matrix proteins include the high-sulfur and high-glycine-tyrosine keratins. This chain is Keratin-associated protein 19-8 (KRTAP19-8), found in Homo sapiens (Human).